We begin with the raw amino-acid sequence, 404 residues long: Argininosuccinate synthase (404 aa).

Residues Ala10 to Ser18 and Ala37 each bind ATP. The L-citrulline site is built by Tyr90 and Ser95. Gly120 serves as a coordination point for ATP. The L-aspartate site is built by Thr122, Asn126, and Asp127. Asn126 is an L-citrulline binding site. L-citrulline-binding residues include Arg130, Ser181, Ser190, Glu266, and Tyr278. Positions Asp173–Trp200 are disordered. Positions Pro179–Glu192 are enriched in polar residues.

This sequence belongs to the argininosuccinate synthase family. Type 1 subfamily. As to quaternary structure, homotetramer.

The protein resides in the cytoplasm. The enzyme catalyses L-citrulline + L-aspartate + ATP = 2-(N(omega)-L-arginino)succinate + AMP + diphosphate + H(+). It participates in amino-acid biosynthesis; L-arginine biosynthesis; L-arginine from L-ornithine and carbamoyl phosphate: step 2/3. This is Argininosuccinate synthase from Novosphingobium aromaticivorans (strain ATCC 700278 / DSM 12444 / CCUG 56034 / CIP 105152 / NBRC 16084 / F199).